Consider the following 58-residue polypeptide: Mastoparan-VT7 (58 aa).

An N-terminal signal peptide occupies residues 1–27 (MKNTILILFTAFIALLGFFGMSAEALA). 4 AXPX repeats span residues 27 to 30 (ADPK), 31 to 34 (ADPL), 35 to 38 (AGPN), and 41 to 44 (ADPE). The propeptide occupies 28 to 45 (DPKADPLAGPNPDADPEA).

This sequence belongs to the MCD family. Mastoparan subfamily. As to expression, expressed by the venom gland.

It localises to the secreted. Its function is as follows. The synthetic peptide shows antimicrobial activities against Gram-negative bacteria (but not against all strains tested), Gram-positive bacteria (all strains tested) and the fungi C.albicans (but not C.parapsilosis). Exhibits little hemolytic activity against washed human erythrocytes. In Vespa tropica (Greater banded hornet), this protein is Mastoparan-VT7.